An 81-amino-acid polypeptide reads, in one-letter code: Short neurotoxin 2 (81 aa).

Residues 1–21 (MKTLLLTLVVVTIVCLDLGYT) form the signal peptide. 4 disulfide bridges follow: cysteine 24-cysteine 43, cysteine 38-cysteine 60, cysteine 62-cysteine 73, and cysteine 74-cysteine 79.

The protein belongs to the three-finger toxin family. Short-chain subfamily. Type I alpha-neurotoxin sub-subfamily. In terms of tissue distribution, expressed by the venom gland.

It is found in the secreted. Functionally, binds to muscle nicotinic acetylcholine receptor (nAChR) and inhibit acetylcholine from binding to the receptor, thereby impairing neuromuscular transmission. The polypeptide is Short neurotoxin 2 (Hydrophis hardwickii (Hardwick's spine-bellied seasnake)).